The primary structure comprises 198 residues: DnaJ homolog subfamily C member 12 (198 aa).

An N-acetylmethionine modification is found at methionine 1. A J domain is found at aspartate 14 to arginine 79. Positions glutamate 114–leucine 177 are disordered. The span at serine 116–proline 125 shows a compositional bias: polar residues. Basic and acidic residues predominate over residues asparagine 126–glutamate 156. A phosphoserine mark is found at serine 160, serine 166, and serine 182.

As to quaternary structure, interacts with HSPA8. Interacts with TPH1. Interacts with TPH2. In terms of tissue distribution, highest levels of expression are detected in kidney, pineal gland, and raphe nuclei in the brain where it localizes to serotonerigic neurons.

It is found in the cytoplasm. In terms of biological role, probable co-chaperone that participates in the proper folding of biopterin-dependent aromatic amino acid hydroxylases, which include phenylalanine-4-hydroxylase (PAH), tyrosine 3-monooxygenase (TH) and peripheral and neuronal tryptophan hydroxylases (TPH1 and TPH2). The protein is DnaJ homolog subfamily C member 12 (Dnajc12) of Mus musculus (Mouse).